Reading from the N-terminus, the 125-residue chain is Large ribosomal subunit protein bL12 (125 aa).

This sequence belongs to the bacterial ribosomal protein bL12 family. In terms of assembly, homodimer. Part of the ribosomal stalk of the 50S ribosomal subunit. Forms a multimeric L10(L12)X complex, where L10 forms an elongated spine to which 2 to 4 L12 dimers bind in a sequential fashion. Binds GTP-bound translation factors.

In terms of biological role, forms part of the ribosomal stalk which helps the ribosome interact with GTP-bound translation factors. Is thus essential for accurate translation. This chain is Large ribosomal subunit protein bL12, found in Heliobacterium modesticaldum (strain ATCC 51547 / Ice1).